Consider the following 321-residue polypeptide: Ubiquinone biosynthesis protein COQ4, mitochondrial (321 aa).

4 residues coordinate Zn(2+): His205, Asp206, His209, and Glu221.

It belongs to the COQ4 family. As to quaternary structure, component of a multi-subunit COQ enzyme complex, composed of at least COQ3, COQ4, COQ5, COQ6, COQ7 and COQ9. The cofactor is Zn(2+).

It localises to the mitochondrion inner membrane. It carries out the reaction a 4-hydroxy-3-methoxy-5-(all-trans-polyprenyl)benzoate + H(+) = a 2-methoxy-6-(all-trans-polyprenyl)phenol + CO2. The protein operates within cofactor biosynthesis; ubiquinone biosynthesis. Its function is as follows. Lyase that catalyzes the C1-decarboxylation of 4-hydroxy-3-methoxy-5-(all-trans-polyprenyl)benzoic acid into 2-methoxy-6-(all-trans-polyprenyl)phenol during ubiquinone biosynthesis. The sequence is that of Ubiquinone biosynthesis protein COQ4, mitochondrial from Candida tropicalis (strain ATCC MYA-3404 / T1) (Yeast).